The chain runs to 162 residues: MMCNCCHCHWRRRCQRLPCALTLLLLLPLAVASEGPNRCDTIYQGFAECLIRLGDGMGRGGELQTVCRSWNDFHACASRVLSGCPEEAAAVWESLQQEARRAPHPDNLHILCGAPVSVRERIAGPETNQETLRATAPALAPAPAPVLLAAALALACLLGPLA.

Positions Met1–Ala32 are cleaved as a signal peptide. A lipid anchor (GPI-anchor amidated alanine) is attached at Ala136. The propeptide at Pro137–Ala162 is removed in mature form.

It belongs to the neuritin family.

Its subcellular location is the cell membrane. In Mus musculus (Mouse), this protein is Neuritin-like protein (Nrn1l).